The primary structure comprises 253 residues: Phosphate import ATP-binding protein PstB (253 aa).

The ABC transporter domain occupies isoleucine 8–isoleucine 248. Glycine 40–serine 47 provides a ligand contact to ATP.

This sequence belongs to the ABC transporter superfamily. Phosphate importer (TC 3.A.1.7) family. As to quaternary structure, the complex is composed of two ATP-binding proteins (PstB), two transmembrane proteins (PstC and PstA) and a solute-binding protein (PstS).

The protein resides in the cell membrane. It catalyses the reaction phosphate(out) + ATP + H2O = ADP + 2 phosphate(in) + H(+). Its function is as follows. Part of the ABC transporter complex PstSACB involved in phosphate import. Responsible for energy coupling to the transport system. The chain is Phosphate import ATP-binding protein PstB from Clostridium perfringens (strain ATCC 13124 / DSM 756 / JCM 1290 / NCIMB 6125 / NCTC 8237 / Type A).